A 357-amino-acid chain; its full sequence is Elongation factor Ts (357 aa).

The involved in Mg(2+) ion dislocation from EF-Tu stretch occupies residues 82–85; sequence TDFV.

It belongs to the EF-Ts family.

It is found in the cytoplasm. Associates with the EF-Tu.GDP complex and induces the exchange of GDP to GTP. It remains bound to the aminoacyl-tRNA.EF-Tu.GTP complex up to the GTP hydrolysis stage on the ribosome. The polypeptide is Elongation factor Ts (Campylobacter jejuni subsp. jejuni serotype O:2 (strain ATCC 700819 / NCTC 11168)).